The primary structure comprises 120 residues: Ribonuclease P protein component (120 aa).

Belongs to the RnpA family. Consists of a catalytic RNA component (M1 or rnpB) and a protein subunit.

The enzyme catalyses Endonucleolytic cleavage of RNA, removing 5'-extranucleotides from tRNA precursor.. Functionally, RNaseP catalyzes the removal of the 5'-leader sequence from pre-tRNA to produce the mature 5'-terminus. It can also cleave other RNA substrates such as 4.5S RNA. The protein component plays an auxiliary but essential role in vivo by binding to the 5'-leader sequence and broadening the substrate specificity of the ribozyme. The polypeptide is Ribonuclease P protein component (Latilactobacillus sakei subsp. sakei (strain 23K) (Lactobacillus sakei subsp. sakei)).